Here is a 417-residue protein sequence, read N- to C-terminus: Exodeoxyribonuclease 7 large subunit (417 aa).

The protein belongs to the XseA family. In terms of assembly, heterooligomer composed of large and small subunits.

It localises to the cytoplasm. The enzyme catalyses Exonucleolytic cleavage in either 5'- to 3'- or 3'- to 5'-direction to yield nucleoside 5'-phosphates.. Bidirectionally degrades single-stranded DNA into large acid-insoluble oligonucleotides, which are then degraded further into small acid-soluble oligonucleotides. The sequence is that of Exodeoxyribonuclease 7 large subunit from Lactococcus lactis subsp. cremoris (strain MG1363).